Here is a 537-residue protein sequence, read N- to C-terminus: Zinc finger protein 703 (537 aa).

Disordered stretches follow at residues M1–A38, S90–V254, and V300–A323. The span at S101–L111 shows a compositional bias: polar residues. Over residues G149–K158 the composition is skewed to low complexity. Residues S176 to G185 are compositionally biased toward polar residues. Residues C188 to A203 show a composition bias toward basic and acidic residues. Residues K205–A220 are compositionally biased toward polar residues. Positions S221–S232 are enriched in low complexity. The C2H2-type zinc-finger motif lies at H409–H437.

This sequence belongs to the Elbow/Noc family.

Its subcellular location is the nucleus. The protein resides in the cytoplasm. In terms of biological role, transcriptional corepressor which does not bind directly to DNA and may regulate transcription through recruitment of histone deacetylases to gene promoters. Regulates cell adhesion, migration and proliferation. Involved in specification of the lateral neural plate border (NPB). May be required for segmental gene expression during hindbrain development. The sequence is that of Zinc finger protein 703 (znf703) from Xenopus tropicalis (Western clawed frog).